Consider the following 558-residue polypeptide: Type I restriction enzyme MjaIX methylase subunit (558 aa).

The tract at residues 1–37 is disordered; that stretch reads MATLDKFLSIKENDEKTKKKESKKKSSKSNKTSESLV. Residues 8–18 show a composition bias toward basic and acidic residues; that stretch reads LSIKENDEKTK. The segment covering 19–28 has biased composition (basic residues); sequence KKESKKKSSK. S-adenosyl-L-methionine is bound by residues 227 to 232, 256 to 258, and D283; these read KFYTPR and SGG.

It belongs to the N(4)/N(6)-methyltransferase family. As to quaternary structure, the type I restriction/modification system is composed of three polypeptides R, M and S.

It catalyses the reaction a 2'-deoxyadenosine in DNA + S-adenosyl-L-methionine = an N(6)-methyl-2'-deoxyadenosine in DNA + S-adenosyl-L-homocysteine + H(+). The subtype gamma methyltransferase (M) subunit of a type I restriction enzyme. The M and S subunits together form a methyltransferase (MTase) that methylates A-3 on the top and A-2 on the bottom strand of the sequence 5'-CCAN(5)GTR-3'. In the presence of the R subunit the complex can also act as an endonuclease, binding to the same target sequence but cutting the DNA some distance from this site. Whether the DNA is cut or modified depends on the methylation state of the target sequence. When the target site is unmodified, the DNA is cut. When the target site is hemimethylated, the complex acts as a maintenance MTase modifying the DNA so that both strands become methylated. After locating a non-methylated recognition site, the enzyme complex serves as a molecular motor that translocates DNA in an ATP-dependent manner until a collision occurs that triggers cleavage. This is Type I restriction enzyme MjaIX methylase subunit from Methanocaldococcus jannaschii (strain ATCC 43067 / DSM 2661 / JAL-1 / JCM 10045 / NBRC 100440) (Methanococcus jannaschii).